The primary structure comprises 513 residues: uncharacterized protein (513 aa).

2 disordered regions span residues 72 to 113 (GVVP…TGQF) and 155 to 262 (IMGG…NPRF). Positions 82–106 (ANRTANPNTNSNPNPNATNAQPNPT) are enriched in low complexity. Composition is skewed to polar residues over residues 164–189 (EANS…QTQG) and 210–228 (TPLN…EFQQ). A compositionally biased stretch (low complexity) spans 229–238 (TTSPIFSSSS). Residues 239–248 (TPPPPPPRPS) are compositionally biased toward pro residues. The segment covering 253–262 (GESQNTNPRF) has biased composition (polar residues). Residues 396–437 (CTICMEMFKINDDVIQLPCKHYFHENCIKPWLRVNGTCAICR) form an RING-type; atypical zinc finger. Residues 439–513 (PVDPNSQQRN…DDFVDEEPLE (75 aa)) are disordered. The span at 442–493 (PNSQQRNNTSTDSANGHNPSNHANPSTSTTNDQGATLRNESFNAASQSNLSS) shows a compositional bias: polar residues.

This is an uncharacterized protein from Schizosaccharomyces pombe (strain 972 / ATCC 24843) (Fission yeast).